Reading from the N-terminus, the 439-residue chain is Adenylosuccinate synthetase (439 aa).

GTP-binding positions include 25–31 (GDEGKGK), 53–55 (GHT), and Lys-62. The Proton acceptor role is filled by Asp-26. Mg(2+)-binding residues include Asp-26 and Gly-53. Residues 26-29 (DEGK) and 51-54 (NAGH) contribute to the IMP site. The Proton donor role is filled by His-54. 4 residues coordinate IMP: Thr-141, Arg-155, Asn-232, and Thr-247. Thr-307 serves as a coordination point for GTP. Residue 307–313 (TTTNRPR) participates in substrate binding. Arg-311 contributes to the IMP binding site. Residues Arg-313, 339–341 (KLD), and 425–427 (GVG) contribute to the GTP site.

The protein belongs to the adenylosuccinate synthetase family. Homodimer. Requires Mg(2+) as cofactor.

It is found in the cytoplasm. The enzyme catalyses IMP + L-aspartate + GTP = N(6)-(1,2-dicarboxyethyl)-AMP + GDP + phosphate + 2 H(+). It functions in the pathway purine metabolism; AMP biosynthesis via de novo pathway; AMP from IMP: step 1/2. Plays an important role in the salvage pathway for purine nucleotide biosynthesis. Catalyzes the first committed step in the biosynthesis of AMP from IMP. This Plasmodium yoelii yoelii protein is Adenylosuccinate synthetase.